A 560-amino-acid polypeptide reads, in one-letter code: Leucine-rich repeat and IQ domain-containing protein 4 (560 aa).

The disordered stretch occupies residues 1 to 20 (MSKDIKSVEHSPKIHQRNDP). LRR repeat units follow at residues 23-47 (VNDR…IFTF), 48-70 (TELE…IQRL), 72-95 (NIRV…LLSS), 97-116 (ESLD…VVSF), 117-140 (LHAL…IFKN), 141-164 (LHHL…IVNQ), 166-187 (KLRE…LCVL), 188-210 (YTLE…IGHL), 212-233 (GLQK…LCQC), 234-256 (SQLS…FAEL), 258-281 (KMTE…RWTS), 283-301 (HLLY…SFRC), 302-325 (LVNL…ICAL), 326-348 (KNLE…LGSL), 350-371 (KLKI…VLSL), 374-397 (LEKL…IRKL), 398-422 (QSLK…SMPN), 424-443 (EVLD…ICQA), 444-466 (QALK…LDSL), and 468-489 (NLKV…VCAE). The IQ domain maps to 504–533 (RNIMATKIQAWWRGTMVQRGFGKFGELLKP). Residues 529 to 560 (ELLKPQKKGKTSPKDKKGKKDVKGKPGKGKKK) form a disordered region. Positions 533 to 560 (PQKKGKTSPKDKKGKKDVKGKPGKGKKK) are enriched in basic residues.

This chain is Leucine-rich repeat and IQ domain-containing protein 4 (LRRIQ4), found in Homo sapiens (Human).